We begin with the raw amino-acid sequence, 410 residues long: Class E basic helix-loop-helix protein 41 (410 aa).

K31 participates in a covalent cross-link: Glycyl lysine isopeptide (Lys-Gly) (interchain with G-Cter in SUMO2). Positions 44–99 (TYKLPHRLIEKKRRDRINECIAQLKDLLPEHLKLTTLGHLEKAVVLELTLKHLKAL) constitute a bHLH domain. A Glycyl lysine isopeptide (Lys-Gly) (interchain with G-Cter in SUMO2) cross-link involves residue K121. The Orange domain maps to 131 to 166 (FHSGFQTCAKEVLQYLARFESWTPREPRCAQLVSHL). 2 disordered regions span residues 209-255 (IQRT…KRPK) and 360-410 (GATA…KDAP). K240 is covalently cross-linked (Glycyl lysine isopeptide (Lys-Gly) (interchain with G-Cter in SUMO2)).

In terms of assembly, homodimer. Heterodimer with BHLHE40/DEC1. Interacts with CIART. Interacts with BMAL1. Interacts with RXRA. Interacts with NR0B2 and HNF1A. As to expression, expressed in skeletal muscle, brain and lung.

The protein localises to the nucleus. Transcriptional repressor involved in the regulation of the circadian rhythm by negatively regulating the activity of the clock genes and clock-controlled genes. Acts as the negative limb of a novel autoregulatory feedback loop (DEC loop) which differs from the one formed by the PER and CRY transcriptional repressors (PER/CRY loop). Both these loops are interlocked as it represses the expression of PER1 and in turn is repressed by PER1/2 and CRY1/2. Represses the activity of the circadian transcriptional activator: CLOCK-BMAL1 heterodimer by competing for the binding to E-box elements (5'-CACGTG-3') found within the promoters of its target genes. Negatively regulates its own expression and the expression of DBP and BHLHE41/DEC2. Acts as a corepressor of RXR and the RXR-LXR heterodimers and represses the ligand-induced RXRA/B/G, NR1H3/LXRA, NR1H4 and VDR transactivation activity. Inhibits HNF1A-mediated transactivation of CYP1A2, CYP2E1 and CYP3A11. The polypeptide is Class E basic helix-loop-helix protein 41 (Bhlhe41) (Mus musculus (Mouse)).